Consider the following 609-residue polypeptide: Dihydroxy-acid dehydratase (609 aa).

Aspartate 81 provides a ligand contact to Mg(2+). [2Fe-2S] cluster is bound at residue cysteine 122. Residues aspartate 123 and lysine 124 each coordinate Mg(2+). Lysine 124 is modified (N6-carboxylysine). Cysteine 195 contacts [2Fe-2S] cluster. Glutamate 491 serves as a coordination point for Mg(2+). Serine 517 functions as the Proton acceptor in the catalytic mechanism.

This sequence belongs to the IlvD/Edd family. As to quaternary structure, homodimer. The cofactor is [2Fe-2S] cluster. It depends on Mg(2+) as a cofactor.

It carries out the reaction (2R)-2,3-dihydroxy-3-methylbutanoate = 3-methyl-2-oxobutanoate + H2O. The enzyme catalyses (2R,3R)-2,3-dihydroxy-3-methylpentanoate = (S)-3-methyl-2-oxopentanoate + H2O. Its pathway is amino-acid biosynthesis; L-isoleucine biosynthesis; L-isoleucine from 2-oxobutanoate: step 3/4. The protein operates within amino-acid biosynthesis; L-valine biosynthesis; L-valine from pyruvate: step 3/4. Its function is as follows. Functions in the biosynthesis of branched-chain amino acids. Catalyzes the dehydration of (2R,3R)-2,3-dihydroxy-3-methylpentanoate (2,3-dihydroxy-3-methylvalerate) into 2-oxo-3-methylpentanoate (2-oxo-3-methylvalerate) and of (2R)-2,3-dihydroxy-3-methylbutanoate (2,3-dihydroxyisovalerate) into 2-oxo-3-methylbutanoate (2-oxoisovalerate), the penultimate precursor to L-isoleucine and L-valine, respectively. The sequence is that of Dihydroxy-acid dehydratase from Acinetobacter baumannii (strain ATCC 17978 / DSM 105126 / CIP 53.77 / LMG 1025 / NCDC KC755 / 5377).